The following is a 342-amino-acid chain: Periplasmic protein TorT (342 aa).

An N-terminal signal peptide occupies residues 1-18 (MRVLLFLLLSLFMLPAFS).

Belongs to the bacterial solute-binding protein 2 family.

It is found in the periplasm. In terms of biological role, upon binding a putative inducer it probably interacts with TorS and allows it to play a role in the induction of the torCAD operon for trimethylamine N-oxide reductase. The chain is Periplasmic protein TorT (torT) from Escherichia coli (strain K12).